The chain runs to 311 residues: Pyrimidine-specific ribonucleoside hydrolase RihA (311 aa).

Histidine 240 is a catalytic residue.

The protein belongs to the IUNH family. RihA subfamily.

Hydrolyzes with equal efficiency cytidine or uridine to ribose and cytosine or uracil, respectively. In Escherichia coli (strain SMS-3-5 / SECEC), this protein is Pyrimidine-specific ribonucleoside hydrolase RihA.